Reading from the N-terminus, the 198-residue chain is MGDTMEIQLPDIEEIKLEDVLIKRRSVREYCSSPLTLRELSHILFAAYGVTDERGFKTVPSAGATYPLEIYVNVRDVVGVEEGVYKYIPERHSIVRILDEEVGHELALAALKQMFIAIAPIVLIIAANYERTTRVYGDRGFRYVHMEVGHVAQNVYLMATSLGLGTVSVGAFYDNEIREILKIKEYPLLLMPVGRKIE.

Belongs to the nitroreductase family. FMN is required as a cofactor.

This is Putative nitroreductase MJ1384 from Methanocaldococcus jannaschii (strain ATCC 43067 / DSM 2661 / JAL-1 / JCM 10045 / NBRC 100440) (Methanococcus jannaschii).